The primary structure comprises 297 residues: Ribosomal RNA small subunit methyltransferase H (297 aa).

Residues 37–39, Glu-56, Phe-87, Asp-102, and His-109 contribute to the S-adenosyl-L-methionine site; that span reads GGH.

Belongs to the methyltransferase superfamily. RsmH family.

It is found in the cytoplasm. It carries out the reaction cytidine(1402) in 16S rRNA + S-adenosyl-L-methionine = N(4)-methylcytidine(1402) in 16S rRNA + S-adenosyl-L-homocysteine + H(+). Its function is as follows. Specifically methylates the N4 position of cytidine in position 1402 (C1402) of 16S rRNA. This Borrelia duttonii (strain Ly) protein is Ribosomal RNA small subunit methyltransferase H.